A 280-amino-acid chain; its full sequence is S-methyl-5'-thioadenosine phosphorylase (280 aa).

Phosphate is bound by residues S18, 60-61 (RH), and 93-94 (TA). M196 lines the substrate pocket. A phosphate-binding site is contributed by T197. 220–222 (DYD) is a substrate binding site.

It belongs to the PNP/MTAP phosphorylase family. MTAP subfamily. Homotrimer.

Its subcellular location is the cytoplasm. The protein resides in the nucleus. It catalyses the reaction S-methyl-5'-thioadenosine + phosphate = 5-(methylsulfanyl)-alpha-D-ribose 1-phosphate + adenine. The protein operates within amino-acid biosynthesis; L-methionine biosynthesis via salvage pathway; S-methyl-5-thio-alpha-D-ribose 1-phosphate from S-methyl-5'-thioadenosine (phosphorylase route): step 1/1. Its function is as follows. Catalyzes the reversible phosphorylation of S-methyl-5'-thioadenosine (MTA) to adenine and 5-methylthioribose-1-phosphate. Involved in the breakdown of MTA, a major by-product of polyamine biosynthesis. Responsible for the first step in the methionine salvage pathway after MTA has been generated from S-adenosylmethionine. Has broad substrate specificity with 6-aminopurine nucleosides as preferred substrates. This chain is S-methyl-5'-thioadenosine phosphorylase, found in Ciona intestinalis (Transparent sea squirt).